The primary structure comprises 388 residues: Succinate--CoA ligase [ADP-forming] subunit beta (388 aa).

The ATP-grasp domain maps to 9-244 (KQLFAEYGLP…PSQEDEREAH (236 aa)). ATP is bound by residues K46, 53–55 (GRG), E99, T102, and E107. Residues N199 and D213 each contribute to the Mg(2+) site. Residues N264 and 321-323 (GIV) each bind substrate.

This sequence belongs to the succinate/malate CoA ligase beta subunit family. In terms of assembly, heterotetramer of two alpha and two beta subunits. Mg(2+) serves as cofactor.

The enzyme catalyses succinate + ATP + CoA = succinyl-CoA + ADP + phosphate. The catalysed reaction is GTP + succinate + CoA = succinyl-CoA + GDP + phosphate. It participates in carbohydrate metabolism; tricarboxylic acid cycle; succinate from succinyl-CoA (ligase route): step 1/1. In terms of biological role, succinyl-CoA synthetase functions in the citric acid cycle (TCA), coupling the hydrolysis of succinyl-CoA to the synthesis of either ATP or GTP and thus represents the only step of substrate-level phosphorylation in the TCA. The beta subunit provides nucleotide specificity of the enzyme and binds the substrate succinate, while the binding sites for coenzyme A and phosphate are found in the alpha subunit. The protein is Succinate--CoA ligase [ADP-forming] subunit beta of Marinomonas sp. (strain MWYL1).